The primary structure comprises 424 residues: Protein arginine N-methyltransferase 2 (424 aa).

Disordered regions lie at residues 67–89 and 151–212; these read DEAQ…EQKS and YEPL…SSRY. Residues 71 to 89 are compositionally biased toward polar residues; sequence TETNGVNGETSSASTEQKS. Composition is skewed to low complexity over residues 163-173 and 187-201; these read TGQGEDAANEP and ETTA…ASTE. Positions 205 to 424 constitute an RMT2 domain; it reads PDVTSSRYLD…YRLPLCKFMD (220 aa). Residues Tyr212, Met241, 261 to 266, 282 to 284, 309 to 310, and Asp329 contribute to the S-adenosyl-L-methionine site; these read HGMGIV, EAH, and WQ.

This sequence belongs to the class I-like SAM-binding methyltransferase superfamily. RMT2 methyltransferase family. Monomer.

The protein localises to the cytoplasm. Its subcellular location is the nucleus. S-adenosyl-L-methionine-dependent protein-arginine N-methyltransferase that methylates the delta-nitrogen atom of arginine residues to form N5-methylarginine (type IV) in target proteins. Monomethylates ribosomal protein L12. The sequence is that of Protein arginine N-methyltransferase 2 from Aspergillus fumigatus (strain ATCC MYA-4609 / CBS 101355 / FGSC A1100 / Af293) (Neosartorya fumigata).